The following is a 46-amino-acid chain: Viscotoxin-1-PS (46 aa).

Intrachain disulfides connect cysteine 3/cysteine 40, cysteine 4/cysteine 32, and cysteine 16/cysteine 26.

The protein belongs to the plant thionin (TC 1.C.44) family.

The protein localises to the secreted. Its function is as follows. Thionins are small plant proteins which are toxic to animal cells. They seem to exert their toxic effect at the level of the cell membrane. Their precise function is not known. The polypeptide is Viscotoxin-1-PS (THI2.4) (Viscum album (European mistletoe)).